A 358-amino-acid polypeptide reads, in one-letter code: Probable dual-specificity RNA methyltransferase RlmN 2 (358 aa).

Glutamate 90 (proton acceptor) is an active-site residue. The Radical SAM core domain maps to 96 to 328; that stretch reads SGIRRTVCVS…VNTCRYTKGD (233 aa). A disulfide bridge connects residues cysteine 103 and cysteine 334. Residues cysteine 110, cysteine 114, and cysteine 117 each contribute to the [4Fe-4S] cluster site. S-adenosyl-L-methionine-binding positions include 160 to 161, serine 192, 215 to 217, and asparagine 291; these read GE and SLH. The active-site S-methylcysteine intermediate is the cysteine 334.

The protein belongs to the radical SAM superfamily. RlmN family. [4Fe-4S] cluster is required as a cofactor.

Its subcellular location is the cytoplasm. It carries out the reaction adenosine(2503) in 23S rRNA + 2 reduced [2Fe-2S]-[ferredoxin] + 2 S-adenosyl-L-methionine = 2-methyladenosine(2503) in 23S rRNA + 5'-deoxyadenosine + L-methionine + 2 oxidized [2Fe-2S]-[ferredoxin] + S-adenosyl-L-homocysteine. The enzyme catalyses adenosine(37) in tRNA + 2 reduced [2Fe-2S]-[ferredoxin] + 2 S-adenosyl-L-methionine = 2-methyladenosine(37) in tRNA + 5'-deoxyadenosine + L-methionine + 2 oxidized [2Fe-2S]-[ferredoxin] + S-adenosyl-L-homocysteine. Specifically methylates position 2 of adenine 2503 in 23S rRNA and position 2 of adenine 37 in tRNAs. This Protochlamydia amoebophila (strain UWE25) protein is Probable dual-specificity RNA methyltransferase RlmN 2.